The sequence spans 62 residues: Enterocin E-760 (62 aa).

It localises to the secreted. Bacteriocin active against the Gram-negative bacteria S.enteritidis, S.choleraesuis, S.typhimurium, S.gallinarum, E.coli O157:H7, Y.enterocolitica, C.freundii, K.pneumoniae, S.dysentriae, P.aeruginosa, P.mirabilis, M.morganii, C.jejuni and 20 other Campylobacter isolates, and the Gram-positive bacteria S.aureus, S.epidermidis and L.monocytogenes. This chain is Enterocin E-760, found in Enterococcus sp.